The following is a 208-amino-acid chain: MTLQTFKSTDFEVFTVDGLEERMSAIKTNIHPKLEALGEQFAAYLSKQTDENFFYHVAKHARRKVNPPNDTWVAFSTNKRGYKMLPHFQIGLWGTHAFIYFGLIYECPQKVETAHAFLEHLNDLKTNIPNDFVWSIDHTKPSVKLHKTLETEDLQKMIERLATVKKAELLVGIHISPEEFSAMTNEQFLAKIESTMQSLLPLYALCNR.

It belongs to the UPF0637 family.

This Bacillus cereus (strain AH820) protein is UPF0637 protein BCAH820_3975.